Here is a 640-residue protein sequence, read N- to C-terminus: UvrABC system protein C (640 aa).

Positions Asp35–Val113 constitute a GIY-YIG domain. Residues Arg223–Val258 enclose the UVR domain.

It belongs to the UvrC family. In terms of assembly, interacts with UvrB in an incision complex.

The protein resides in the cytoplasm. Its function is as follows. The UvrABC repair system catalyzes the recognition and processing of DNA lesions. UvrC both incises the 5' and 3' sides of the lesion. The N-terminal half is responsible for the 3' incision and the C-terminal half is responsible for the 5' incision. This is UvrABC system protein C from Caulobacter vibrioides (strain ATCC 19089 / CIP 103742 / CB 15) (Caulobacter crescentus).